The following is a 503-amino-acid chain: MEFSVKSGSPEKQRSACIVVGVFEPRRLSPIAEQLDKISDGYISALLRRGELEGKVGQTLLLHHVPNVLSERILLIGCGKERELDERQYKQVVQKTINTLNDTGSMEAVCFLTELHVKGRNTYWKVRQAVETAKETLYTFDQLKSNKVEARRPLRKMVFNVPTRRELTSGERAIQHGLAIAAGIKAAKDLGNMPPNICNAGYLASQARQLADNYAGAVTTRVIGEQQMKELGMNAYLAVGQGSQNESLMSVIEYKGNPNPDARPIVLVGKGLTFDAGGISLKPGEGMDEMKYDMCGAASVYGVMRMAAELRLPLNIVGVLAGCENMPGGRAYRPGDILTTMSGQTVEVLNTDAEGRLVLCDVLTYVERFEPELVVDVATLTGACVIALGHHLTGLMANHNPLASELLNAAEQAGDRAWRLPLGEEFQEQLDSNFADMANIGGRPGGAITAACFLARFTRKYNWAHLDIAGTAWRSGKAKGATGRPVAMLSQFLLNRAGLNGEE.

2 residues coordinate Mn(2+): K270 and D275. K282 is a catalytic residue. D293, D352, and E354 together coordinate Mn(2+). Residue R356 is part of the active site.

The protein belongs to the peptidase M17 family. Mn(2+) is required as a cofactor.

Its subcellular location is the cytoplasm. The enzyme catalyses Release of an N-terminal amino acid, Xaa-|-Yaa-, in which Xaa is preferably Leu, but may be other amino acids including Pro although not Arg or Lys, and Yaa may be Pro. Amino acid amides and methyl esters are also readily hydrolyzed, but rates on arylamides are exceedingly low.. It catalyses the reaction Release of an N-terminal amino acid, preferentially leucine, but not glutamic or aspartic acids.. In terms of biological role, presumably involved in the processing and regular turnover of intracellular proteins. Catalyzes the removal of unsubstituted N-terminal amino acids from various peptides. The polypeptide is Probable cytosol aminopeptidase (Edwardsiella ictaluri (strain 93-146)).